The chain runs to 492 residues: Catalase-1 (492 aa).

Catalysis depends on residues His-65 and Asn-138. Tyr-348 contributes to the heme binding site.

The protein belongs to the catalase family. Homotetramer and heterotetramer. At least six or seven isozymes are produced from a mixture of 3 gene products. Interacts with NCA1. Interacts with LSD1. Heme is required as a cofactor.

The protein resides in the cytoplasm. The enzyme catalyses 2 H2O2 = O2 + 2 H2O. Functionally, occurs in almost all aerobically respiring organisms and serves to protect cells from the toxic effects of hydrogen peroxide. In Arabidopsis thaliana (Mouse-ear cress), this protein is Catalase-1 (CAT1).